The following is a 233-amino-acid chain: Large ribosomal subunit protein uL1 (233 aa).

Belongs to the universal ribosomal protein uL1 family. As to quaternary structure, part of the 50S ribosomal subunit.

Its function is as follows. Binds directly to 23S rRNA. The L1 stalk is quite mobile in the ribosome, and is involved in E site tRNA release. In terms of biological role, protein L1 is also a translational repressor protein, it controls the translation of the L11 operon by binding to its mRNA. This chain is Large ribosomal subunit protein uL1, found in Shewanella putrefaciens (strain CN-32 / ATCC BAA-453).